We begin with the raw amino-acid sequence, 471 residues long: Putative multidrug resistance protein MdtD (471 aa).

The Periplasmic segment spans residues 1 to 11; the sequence is MTDLPDSTRWQ. The helical transmembrane segment at 12-32 threads the bilayer; that stretch reads LWIVAFGFFMQSLDTTIVNTA. At 33–48 the chain is on the cytoplasmic side; that stretch reads LPSMAQSLGESPLHMH. Residues 49–69 traverse the membrane as a helical segment; sequence MVIVSYVLTVAVMLPASGWLA. At 70 to 76 the chain is on the periplasmic side; the sequence is DKVGVRN. The helical transmembrane segment at 77–97 threads the bilayer; it reads IFFTAIVLFTLGSLFCALSGT. At 98 to 101 the chain is on the cytoplasmic side; the sequence is LNEL. The helical transmembrane segment at 102–124 threads the bilayer; that stretch reads LLARALQGVGGAMMVPVGRLTVM. The Periplasmic segment spans residues 125-137; that stretch reads KIVPREQYMAAMT. The helical transmembrane segment at 138 to 158 threads the bilayer; that stretch reads FVTLPGQVGPLLGPALGGLLV. The Cytoplasmic portion of the chain corresponds to 159–164; the sequence is EYASWH. A helical membrane pass occupies residues 165–185; the sequence is WIFLINIPVGIIGAIATLMLM. At 186–196 the chain is on the periplasmic side; sequence PNYTMQTRRFD. Residues 197–217 form a helical membrane-spanning segment; the sequence is LSGFLLLAVGMAVLTLALDGS. The Cytoplasmic segment spans residues 218–224; the sequence is KGTGLSP. The chain crosses the membrane as a helical span at residues 225 to 245; the sequence is LAIAGLVAVGVVALVLYLLHA. Over 246–262 the chain is Periplasmic; it reads RNNNRALFSLKLFRTRT. Residues 263–283 traverse the membrane as a helical segment; the sequence is FSLGLAGSFAGRIGSGMLPFM. Residues 284–285 lie on the Cytoplasmic side of the membrane; it reads TP. A helical membrane pass occupies residues 286–306; sequence VFLQIGLGFSPFHAGLMMIPM. Over 307-341 the chain is Periplasmic; the sequence is VLGSMGMKRIVVQVVNRFGYRRVLVATTLGLSLVT. A helical membrane pass occupies residues 342 to 362; the sequence is MLFMTTALLGWYYVLPFVLFL. Residues 363-395 lie on the Cytoplasmic side of the membrane; that stretch reads QGMVNSTRFSSMNTLTLKDLPDNLASSGNSLLS. A helical transmembrane segment spans residues 396–416; sequence MIMQLSMSIGVTIAGLLLGLF. The Periplasmic portion of the chain corresponds to 417–430; that stretch reads GSQHVSVDSGTTQT. The chain crosses the membrane as a helical span at residues 431–451; it reads VFMYTWLSMAFIIALPAFIFA. The Cytoplasmic portion of the chain corresponds to 452-471; that stretch reads RVPNDTHQNVAISRRKRSAQ.

The protein belongs to the major facilitator superfamily. TCR/Tet family.

It localises to the cell inner membrane. The sequence is that of Putative multidrug resistance protein MdtD from Escherichia coli O7:K1 (strain IAI39 / ExPEC).